A 562-amino-acid chain; its full sequence is Formate--tetrahydrofolate ligase (562 aa).

An ATP-binding site is contributed by T71–S78.

It belongs to the formate--tetrahydrofolate ligase family.

The enzyme catalyses (6S)-5,6,7,8-tetrahydrofolate + formate + ATP = (6R)-10-formyltetrahydrofolate + ADP + phosphate. It functions in the pathway one-carbon metabolism; tetrahydrofolate interconversion. This is Formate--tetrahydrofolate ligase from Bacillus cereus (strain ATCC 14579 / DSM 31 / CCUG 7414 / JCM 2152 / NBRC 15305 / NCIMB 9373 / NCTC 2599 / NRRL B-3711).